A 369-amino-acid polypeptide reads, in one-letter code: DNA replication and repair protein RecF (369 aa).

30–37 (GDNGSGKT) lines the ATP pocket.

Belongs to the RecF family.

Its subcellular location is the cytoplasm. Functionally, the RecF protein is involved in DNA metabolism; it is required for DNA replication and normal SOS inducibility. RecF binds preferentially to single-stranded, linear DNA. It also seems to bind ATP. In Pseudomonas aeruginosa (strain LESB58), this protein is DNA replication and repair protein RecF.